The chain runs to 564 residues: Proline--tRNA ligase (564 aa).

Belongs to the class-II aminoacyl-tRNA synthetase family. ProS type 1 subfamily. Homodimer.

Its subcellular location is the cytoplasm. It carries out the reaction tRNA(Pro) + L-proline + ATP = L-prolyl-tRNA(Pro) + AMP + diphosphate. Its function is as follows. Catalyzes the attachment of proline to tRNA(Pro) in a two-step reaction: proline is first activated by ATP to form Pro-AMP and then transferred to the acceptor end of tRNA(Pro). As ProRS can inadvertently accommodate and process non-cognate amino acids such as alanine and cysteine, to avoid such errors it has two additional distinct editing activities against alanine. One activity is designated as 'pretransfer' editing and involves the tRNA(Pro)-independent hydrolysis of activated Ala-AMP. The other activity is designated 'posttransfer' editing and involves deacylation of mischarged Ala-tRNA(Pro). The misacylated Cys-tRNA(Pro) is not edited by ProRS. The polypeptide is Proline--tRNA ligase (Bacillus velezensis (strain DSM 23117 / BGSC 10A6 / LMG 26770 / FZB42) (Bacillus amyloliquefaciens subsp. plantarum)).